A 514-amino-acid chain; its full sequence is Maturase K (514 aa).

The protein belongs to the intron maturase 2 family. MatK subfamily.

The protein localises to the plastid. It localises to the chloroplast. Its function is as follows. Usually encoded in the trnK tRNA gene intron. Probably assists in splicing its own and other chloroplast group II introns. In Acer monspessulanum (Montpellier maple), this protein is Maturase K.